A 214-amino-acid polypeptide reads, in one-letter code: uncharacterized protein (214 aa).

5 helical membrane passes run 33 to 53 (VILF…ILVV), 104 to 124 (ILGI…SYVL), 132 to 152 (FIYL…LSAS), 153 to 173 (GGVL…FGTK), and 186 to 206 (LLIL…TITF).

It is found in the cell membrane. This is an uncharacterized protein from Methanocaldococcus jannaschii (strain ATCC 43067 / DSM 2661 / JAL-1 / JCM 10045 / NBRC 100440) (Methanococcus jannaschii).